Reading from the N-terminus, the 264-residue chain is ELL-associated factor 2 (264 aa).

2 disordered regions span residues 114–154 (EGSS…PSSP) and 169–264 (MDQL…DSDD). A compositionally biased stretch (polar residues) spans 117 to 142 (SKVQSRIEQQQQQIRNSSKTPNNIKN). The segment covering 173–196 (SSSDSSSDSKSSSSSSSSSENSSS) has biased composition (low complexity). Residues 228 to 238 (VPDKDASHNRS) show a composition bias toward basic and acidic residues. Positions 239-264 (QENSGHMMNTLRSDLQLSESGSDSDD) are enriched in polar residues.

It belongs to the EAF family.

Its subcellular location is the nucleus speckle. Its function is as follows. May act as a transcriptional transactivator. In Gallus gallus (Chicken), this protein is ELL-associated factor 2 (EAF2).